A 217-amino-acid polypeptide reads, in one-letter code: MEHSAWHELIKAQLPEHYFGKINQFLDHVYAGGTIYPPREKVFAAIQTTDLEEVKVVILGQDPYHGPGQAQGLSFSVPNSVPAPPSLQNILKELTDDIGVKQDHDLTAWAEQGVLLLNACLTVPAGQANGHAGQIWEPFTDAVIKVVNSLDQPVVYILWGAYARKKKALITNPKHLVIESAHPSPLSAYRGFFGSKPFSQANAYLTSQGRTGIDWLR.

The Proton acceptor role is filled by D62.

This sequence belongs to the uracil-DNA glycosylase (UDG) superfamily. UNG family.

It localises to the cytoplasm. The enzyme catalyses Hydrolyzes single-stranded DNA or mismatched double-stranded DNA and polynucleotides, releasing free uracil.. Its function is as follows. Excises uracil residues from the DNA which can arise as a result of misincorporation of dUMP residues by DNA polymerase or due to deamination of cytosine. The polypeptide is Uracil-DNA glycosylase (Streptococcus suis (strain 98HAH33)).